A 235-amino-acid polypeptide reads, in one-letter code: Orotidine 5'-phosphate decarboxylase (235 aa).

Substrate-binding positions include Asp11, Lys33, 60–69 (DLKFHDIPNT), Thr119, Arg180, Gln189, Gly209, and Arg210. Catalysis depends on Lys62, which acts as the Proton donor.

This sequence belongs to the OMP decarboxylase family. Type 1 subfamily. As to quaternary structure, homodimer.

It carries out the reaction orotidine 5'-phosphate + H(+) = UMP + CO2. Its pathway is pyrimidine metabolism; UMP biosynthesis via de novo pathway; UMP from orotate: step 2/2. Its function is as follows. Catalyzes the decarboxylation of orotidine 5'-monophosphate (OMP) to uridine 5'-monophosphate (UMP). The polypeptide is Orotidine 5'-phosphate decarboxylase (Alkalilimnicola ehrlichii (strain ATCC BAA-1101 / DSM 17681 / MLHE-1)).